A 192-amino-acid polypeptide reads, in one-letter code: uncharacterized protein (192 aa).

This is an uncharacterized protein from Picosynechococcus sp. (strain ATCC 27264 / PCC 7002 / PR-6) (Agmenellum quadruplicatum).